The primary structure comprises 190 residues: Translation initiation factor IF-3 (190 aa).

It belongs to the IF-3 family. Monomer.

The protein localises to the cytoplasm. In terms of biological role, IF-3 binds to the 30S ribosomal subunit and shifts the equilibrium between 70S ribosomes and their 50S and 30S subunits in favor of the free subunits, thus enhancing the availability of 30S subunits on which protein synthesis initiation begins. This Prochlorococcus marinus subsp. pastoris (strain CCMP1986 / NIES-2087 / MED4) protein is Translation initiation factor IF-3.